The primary structure comprises 385 residues: Probable dual-specificity RNA methyltransferase RlmN (385 aa).

Residues Met1 to Leu35 are disordered. Residue Glu121 is the Proton acceptor of the active site. A Radical SAM core domain is found at Thr132–Asp367. A disulfide bridge links Cys139 with Cys372. The [4Fe-4S] cluster site is built by Cys146, Cys150, and Cys153. S-adenosyl-L-methionine-binding positions include Gly198 to Glu199, Ser230, Ser253 to His255, and Asn329. The active-site S-methylcysteine intermediate is Cys372.

Belongs to the radical SAM superfamily. RlmN family. The cofactor is [4Fe-4S] cluster.

It localises to the cytoplasm. The catalysed reaction is adenosine(2503) in 23S rRNA + 2 reduced [2Fe-2S]-[ferredoxin] + 2 S-adenosyl-L-methionine = 2-methyladenosine(2503) in 23S rRNA + 5'-deoxyadenosine + L-methionine + 2 oxidized [2Fe-2S]-[ferredoxin] + S-adenosyl-L-homocysteine. It carries out the reaction adenosine(37) in tRNA + 2 reduced [2Fe-2S]-[ferredoxin] + 2 S-adenosyl-L-methionine = 2-methyladenosine(37) in tRNA + 5'-deoxyadenosine + L-methionine + 2 oxidized [2Fe-2S]-[ferredoxin] + S-adenosyl-L-homocysteine. Its function is as follows. Specifically methylates position 2 of adenine 2503 in 23S rRNA and position 2 of adenine 37 in tRNAs. The sequence is that of Probable dual-specificity RNA methyltransferase RlmN from Heliobacterium modesticaldum (strain ATCC 51547 / Ice1).